Consider the following 255-residue polypeptide: GTP cyclohydrolase III 1 (255 aa).

It belongs to the archaeal-type GTP cyclohydrolase family.

It carries out the reaction GTP + 3 H2O = 2-amino-5-formylamino-6-(5-phospho-D-ribosylamino)pyrimidin-4(3H)-one + 2 phosphate + 2 H(+). Its function is as follows. Catalyzes the formation of 2-amino-5-formylamino-6-ribofuranosylamino-4(3H)-pyrimidinone ribonucleotide monophosphate and inorganic phosphate from GTP. Also has an independent pyrophosphate phosphohydrolase activity. The chain is GTP cyclohydrolase III 1 (gch31) from Halobacterium salinarum (strain ATCC 700922 / JCM 11081 / NRC-1) (Halobacterium halobium).